The chain runs to 87 residues: Exodeoxyribonuclease 7 small subunit (87 aa).

It belongs to the XseB family. In terms of assembly, heterooligomer composed of large and small subunits.

It is found in the cytoplasm. It carries out the reaction Exonucleolytic cleavage in either 5'- to 3'- or 3'- to 5'-direction to yield nucleoside 5'-phosphates.. In terms of biological role, bidirectionally degrades single-stranded DNA into large acid-insoluble oligonucleotides, which are then degraded further into small acid-soluble oligonucleotides. The sequence is that of Exodeoxyribonuclease 7 small subunit from Halorhodospira halophila (strain DSM 244 / SL1) (Ectothiorhodospira halophila (strain DSM 244 / SL1)).